The primary structure comprises 178 residues: Protein GrpE (178 aa).

This sequence belongs to the GrpE family. As to quaternary structure, homodimer.

The protein resides in the cytoplasm. In terms of biological role, participates actively in the response to hyperosmotic and heat shock by preventing the aggregation of stress-denatured proteins, in association with DnaK and GrpE. It is the nucleotide exchange factor for DnaK and may function as a thermosensor. Unfolded proteins bind initially to DnaJ; upon interaction with the DnaJ-bound protein, DnaK hydrolyzes its bound ATP, resulting in the formation of a stable complex. GrpE releases ADP from DnaK; ATP binding to DnaK triggers the release of the substrate protein, thus completing the reaction cycle. Several rounds of ATP-dependent interactions between DnaJ, DnaK and GrpE are required for fully efficient folding. This is Protein GrpE from Rickettsia africae (strain ESF-5).